The sequence spans 179 residues: Large ribosomal subunit protein uL6 (179 aa).

The protein belongs to the universal ribosomal protein uL6 family. In terms of assembly, part of the 50S ribosomal subunit.

Functionally, this protein binds to the 23S rRNA, and is important in its secondary structure. It is located near the subunit interface in the base of the L7/L12 stalk, and near the tRNA binding site of the peptidyltransferase center. In Syntrophotalea carbinolica (strain DSM 2380 / NBRC 103641 / GraBd1) (Pelobacter carbinolicus), this protein is Large ribosomal subunit protein uL6.